The chain runs to 1823 residues: Vitellogenin (1823 aa).

The N-terminal stretch at 1–14 (MWKLLLVALAFALA) is a signal peptide. Position 17 is a pyrrolidone carboxylic acid (Gln17). A Vitellogenin domain is found at 18–658 (FQPGKVYRYS…SPSGPLPRAV (641 aa)). Positions 953–986 (KGLISQQQQQPHHQQQPHQHGQDQARAAYQRPWA) are disordered. The span at 958-976 (QQQQQPHHQQQPHQHGQDQ) shows a compositional bias: low complexity. Asn1097 carries an N-linked (GlcNAc...) asparagine glycan. A disordered region spans residues 1119 to 1289 (SDKDKDAKKP…SSSSSESKSL (171 aa)). Composition is skewed to low complexity over residues 1128–1149 (PPGS…SSSD) and 1178–1192 (SSSS…SDSS). Residues 1194–1206 (SPHKHGGAKRQHA) show a composition bias toward basic residues. 2 stretches are compositionally biased toward low complexity: residues 1217–1238 (SHSS…KSFS) and 1253–1286 (SSSS…SSES). Asn1298 carries an N-linked (GlcNAc...) asparagine glycan. The interval 1308–1351 (VPQRKPQTSRRHTPASSSSSSSSSSSSSSSSSSSDSDMTVSAES) is disordered. Over residues 1323–1344 (SSSSSSSSSSSSSSSSSSSDSD) the composition is skewed to low complexity. The region spanning 1564 to 1732 (SACELNEQSL…SWIAPDETCG (169 aa)) is the VWFD domain. Intrachain disulfides connect Cys1566-Cys1695 and Cys1589-Cys1731. Asn1675 carries N-linked (GlcNAc...) asparagine glycosylation.

What corresponds to phosvitin in other species is lost during maturation of vitellogenin to lipovitellin. As to expression, produced by the liver, secreted into the blood and then sequestered by receptor mediated endocytosis into growing oocytes, where it is generally cleaved, giving rise to the respective yolk components lipovitellins 1 and 2.

In terms of biological role, precursor of the major egg-yolk proteins that are sources of nutrients during early development of oviparous organisms. This Ichthyomyzon unicuspis (Silver lamprey) protein is Vitellogenin.